The primary structure comprises 291 residues: ATP synthase gamma chain (291 aa).

The protein belongs to the ATPase gamma chain family. As to quaternary structure, F-type ATPases have 2 components, CF(1) - the catalytic core - and CF(0) - the membrane proton channel. CF(1) has five subunits: alpha(3), beta(3), gamma(1), delta(1), epsilon(1). CF(0) has three main subunits: a, b and c.

The protein resides in the cell inner membrane. Produces ATP from ADP in the presence of a proton gradient across the membrane. The gamma chain is believed to be important in regulating ATPase activity and the flow of protons through the CF(0) complex. The sequence is that of ATP synthase gamma chain from Sinorhizobium medicae (strain WSM419) (Ensifer medicae).